A 558-amino-acid chain; its full sequence is NXPE family member 2 (558 aa).

Residues 17–37 (ASARKLFLIVLIIFVFWVVFM) traverse the membrane as a helical segment.

This sequence belongs to the NXPE family.

The protein localises to the membrane. This Mus musculus (Mouse) protein is NXPE family member 2 (Nxpe2).